A 478-amino-acid polypeptide reads, in one-letter code: Putative response regulator NtrX-like (478 aa).

One can recognise a Response regulatory domain in the interval 5–121 (DVLIVDDEED…KLVILLKRAC (117 aa)). D54 carries the post-translational modification 4-aspartylphosphate. One can recognise a Sigma-54 factor interaction domain in the interval 143–372 (LVGNSTITLK…LRNVVEWTLI (230 aa)). ATP contacts are provided by residues 171–178 (GKVGSGKE) and 235–244 (ANNGTLYIDE).

In terms of biological role, member of the two-component regulatory system RBE_0312/RBE_0470. In Rickettsia bellii (strain RML369-C), this protein is Putative response regulator NtrX-like.